The chain runs to 202 residues: IMP cyclohydrolase (202 aa).

The interval 29-52 (VQRDGTVTVEPTPDAPETDNPYIS) is disordered.

The protein belongs to the archaeal IMP cyclohydrolase family.

The catalysed reaction is IMP + H2O = 5-formamido-1-(5-phospho-D-ribosyl)imidazole-4-carboxamide. Its pathway is purine metabolism; IMP biosynthesis via de novo pathway; IMP from 5-formamido-1-(5-phospho-D-ribosyl)imidazole-4-carboxamide: step 1/1. Its function is as follows. Catalyzes the cyclization of 5-formylamidoimidazole-4-carboxamide ribonucleotide to IMP. The chain is IMP cyclohydrolase from Haloarcula marismortui (strain ATCC 43049 / DSM 3752 / JCM 8966 / VKM B-1809) (Halobacterium marismortui).